Reading from the N-terminus, the 415-residue chain is L-cysteine:1D-myo-inositol 2-amino-2-deoxy-alpha-D-glucopyranoside ligase (415 aa).

Cysteine 43 is a Zn(2+) binding site. L-cysteinyl-5'-AMP-binding positions include 43–46, threonine 58, and 81–83; these read CGIT and NVT. Residues 45 to 55 carry the 'HIGH' region motif; it reads ITPYDATHLGH. The 'ERGGDP' region motif lies at 187–192; sequence ERGGDP. Tryptophan 227 contacts L-cysteinyl-5'-AMP. Cysteine 231 provides a ligand contact to Zn(2+). L-cysteinyl-5'-AMP is bound at residue 249–251; sequence GSD. Zn(2+) is bound at residue histidine 256. Position 283 (isoleucine 283) interacts with L-cysteinyl-5'-AMP. The short motif at 289-293 is the 'KMSKS' region element; the sequence is KMSKS.

Belongs to the class-I aminoacyl-tRNA synthetase family. MshC subfamily. As to quaternary structure, monomer. Zn(2+) is required as a cofactor.

It carries out the reaction 1D-myo-inositol 2-amino-2-deoxy-alpha-D-glucopyranoside + L-cysteine + ATP = 1D-myo-inositol 2-(L-cysteinylamino)-2-deoxy-alpha-D-glucopyranoside + AMP + diphosphate + H(+). Its function is as follows. Catalyzes the ATP-dependent condensation of GlcN-Ins and L-cysteine to form L-Cys-GlcN-Ins. This chain is L-cysteine:1D-myo-inositol 2-amino-2-deoxy-alpha-D-glucopyranoside ligase, found in Saccharomonospora viridis (strain ATCC 15386 / DSM 43017 / JCM 3036 / CCUG 5913 / NBRC 12207 / NCIMB 9602 / P101) (Thermoactinomyces viridis).